The primary structure comprises 521 residues: Bifunctional purine biosynthesis protein PurH (521 aa).

The MGS-like domain occupies 1-145 (MIKQALISVS…KNHRDVTVVV (145 aa)).

This sequence belongs to the PurH family.

The catalysed reaction is (6R)-10-formyltetrahydrofolate + 5-amino-1-(5-phospho-beta-D-ribosyl)imidazole-4-carboxamide = 5-formamido-1-(5-phospho-D-ribosyl)imidazole-4-carboxamide + (6S)-5,6,7,8-tetrahydrofolate. It catalyses the reaction IMP + H2O = 5-formamido-1-(5-phospho-D-ribosyl)imidazole-4-carboxamide. The protein operates within purine metabolism; IMP biosynthesis via de novo pathway; 5-formamido-1-(5-phospho-D-ribosyl)imidazole-4-carboxamide from 5-amino-1-(5-phospho-D-ribosyl)imidazole-4-carboxamide (10-formyl THF route): step 1/1. Its pathway is purine metabolism; IMP biosynthesis via de novo pathway; IMP from 5-formamido-1-(5-phospho-D-ribosyl)imidazole-4-carboxamide: step 1/1. This Burkholderia cenocepacia (strain HI2424) protein is Bifunctional purine biosynthesis protein PurH.